We begin with the raw amino-acid sequence, 57 residues long: Large ribosomal subunit protein uL30 (57 aa).

Belongs to the universal ribosomal protein uL30 family. Part of the 50S ribosomal subunit.

This chain is Large ribosomal subunit protein uL30, found in Acholeplasma laidlawii (strain PG-8A).